Consider the following 356-residue polypeptide: D-amino-acid oxidase (356 aa).

The signal sequence occupies residues 1-17; the sequence is MAKIVVIGAGVAGLTTA. Positions 9, 44, 48, and 50 each coordinate FAD. Phenylalanine 54 contributes to the anthranilate binding site. Valine 171 contributes to the FAD binding site. Residue asparagine 192 is glycosylated (N-linked (GlcNAc...) asparagine). Tyrosine 243 serves as a coordination point for anthranilate. Tyrosine 243 lines the (R)-lactate pocket. N-linked (GlcNAc...) asparagine glycosylation is present at asparagine 262. 5 residues coordinate FAD: arginine 302, alanine 329, glycine 332, tyrosine 333, and glutamine 334. Arginine 302 contacts anthranilate. Arginine 302 is a (R)-lactate binding site.

Belongs to the DAMOX/DASOX family. FAD is required as a cofactor.

It is found in the peroxisome matrix. It catalyses the reaction a D-alpha-amino acid + O2 + H2O = a 2-oxocarboxylate + H2O2 + NH4(+). The enzyme catalyses D-alanine + O2 + H2O = pyruvate + H2O2 + NH4(+). It carries out the reaction D-serine + O2 + H2O = 3-hydroxypyruvate + H2O2 + NH4(+). The catalysed reaction is D-phenylalanine + O2 + H2O = 3-phenylpyruvate + H2O2 + NH4(+). It catalyses the reaction D-lysine + O2 + H2O = 6-amino-2-oxohexanoate + H2O2 + NH4(+). The enzyme catalyses D-tyrosine + O2 + H2O = 3-(4-hydroxyphenyl)pyruvate + H2O2 + NH4(+). It carries out the reaction D-methionine + O2 + H2O = 4-methylsulfanyl-2-oxobutanoate + H2O2 + NH4(+). The catalysed reaction is D-tryptophan + O2 + H2O = indole-3-pyruvate + H2O2 + NH4(+). It catalyses the reaction D-leucine + O2 + H2O = 4-methyl-2-oxopentanoate + H2O2 + NH4(+). The enzyme catalyses D-valine + O2 + H2O = 3-methyl-2-oxobutanoate + H2O2 + NH4(+). Its activity is regulated as follows. Inhibited by benzoate and hypochlorite. Catalyzes the oxidative deamination of D-amino acids with broad substrate specificity. Enables the organism to utilize D-amino acids as a source of nutrients. The chain is D-amino-acid oxidase from Trigonopsis variabilis (Yeast).